The primary structure comprises 583 residues: L-galactono-1,4-lactone dehydrogenase 2, mitochondrial (583 aa).

Residues 1 to 36 (MRRLLLAGILRRASSSPSSHHHLHLVRALSASSPLP) constitute a mitochondrion transit peptide. Residues 37–78 (ASDADLRKYAGYALLLLGCGAATYYSFPLPPDALHKKAVPFK) constitute a propeptide, removed in mature form. The chain crosses the membrane as a helical span at residues 45–61 (YAGYALLLLGCGAATYY). An FAD-binding PCMH-type domain is found at 95–266 (THEVHTRVLL…AEVTLQCVER (172 aa)).

It depends on FAD as a cofactor.

The protein localises to the mitochondrion membrane. The catalysed reaction is L-galactono-1,4-lactone + 4 Fe(III)-[cytochrome c] = L-dehydroascorbate + 4 Fe(II)-[cytochrome c] + 5 H(+). It participates in cofactor biosynthesis; L-ascorbate biosynthesis. Functionally, involved in the biosynthesis of ascorbic acid. The protein is L-galactono-1,4-lactone dehydrogenase 2, mitochondrial (GLDH2) of Oryza sativa subsp. japonica (Rice).